The chain runs to 142 residues: Probable transport accessory protein MmpS5 (142 aa).

A helical transmembrane segment spans residues 7 to 26 (RAWIPLLILVVVAIAGFTVQ).

Belongs to the MmpS family.

Its subcellular location is the cell membrane. In Mycobacterium bovis (strain ATCC BAA-935 / AF2122/97), this protein is Probable transport accessory protein MmpS5 (mmpS5).